We begin with the raw amino-acid sequence, 290 residues long: Glutaredoxin domain-containing cysteine-rich protein 1 (290 aa).

A Glutaredoxin domain is found at 127–234 (LQQPSADLEF…DLLTKIERVQ (108 aa)).

The protein belongs to the GRXCR1 family. In the inner ear, expressed predominantly in sensory hair cells and their stereocilia bundles with higher levels in outer hair cells (OHC) at P1 and in inner hair cells (IHC) at P5. At P1, expression is prominent in each row of stereocilia within bundles including immature shorter stereocilia. Expression is also observed in apical microvilli of sensory cells at P1 and in kinocilia at P1 and P5. In the adult, expression is localized throughout the length of the stereocilia of both OHC and IHC (at protein level).

The protein localises to the cell projection. It is found in the stereocilium. The protein resides in the microvillus. It localises to the kinocilium. Functionally, may play a role in actin filament architecture in developing stereocilia of sensory cells. The sequence is that of Glutaredoxin domain-containing cysteine-rich protein 1 (Grxcr1) from Mus musculus (Mouse).